We begin with the raw amino-acid sequence, 369 residues long: N-methyltransferase imqF (369 aa).

This sequence belongs to the methyltransferase superfamily.

It functions in the pathway secondary metabolite biosynthesis. In terms of biological role, N-methyltransferase; part of the gene cluster that mediates the biosynthesis of imizoquins A to D, tripeptide-derived alkaloids that serve a protective role against oxidative stress that are essential for normal germination. ImqB is a canonical three-module NRPS that assembles the tripeptide backbone of the imizoquins via condensation of Trp, Tyr, and Leu-derived precursors. N-methylation by imqF and phenol oxidation by imqC, followed by cyclization via the FAD-dependent oxidase imqH carry out the three-step transformation of L-tyrosine into tetrahydroisoquinoline. Importantly, this sequence requires the presence of a free amine in the tyrosine moiety, indicating that isoquinoline formation occurs prior to peptide bond formation. The imidazolidin-4-one ring of imizoquins could form following additional oxidation of the methyl-derived bridgehead carbon by imqH. Lastly, O-methylation by imqG and leucine hydroxylation by imqE complete biosynthesis of the imizoquins. This chain is N-methyltransferase imqF, found in Aspergillus flavus (strain ATCC 200026 / FGSC A1120 / IAM 13836 / NRRL 3357 / JCM 12722 / SRRC 167).